A 209-amino-acid chain; its full sequence is Outer-membrane lipoprotein carrier protein (209 aa).

Positions 1-21 (MHRQLRYAVLATALFASTAFA) are cleaved as a signal peptide.

It belongs to the LolA family. In terms of assembly, monomer.

It is found in the periplasm. In terms of biological role, participates in the translocation of lipoproteins from the inner membrane to the outer membrane. Only forms a complex with a lipoprotein if the residue after the N-terminal Cys is not an aspartate (The Asp acts as a targeting signal to indicate that the lipoprotein should stay in the inner membrane). The chain is Outer-membrane lipoprotein carrier protein from Xanthomonas axonopodis pv. citri (strain 306).